Here is a 178-residue protein sequence, read N- to C-terminus: PRA1 family protein 2 (178 aa).

Residues 1 to 41 (MSEVRLPPLRALDDFVLGSARLAAPDPCDPQRWCHRVINNL) lie on the Cytoplasmic side of the membrane. A helical membrane pass occupies residues 42 to 62 (LYYQTNYLLCFGIGLALAGYV). Residues 63–64 (RP) lie on the Extracellular side of the membrane. A helical transmembrane segment spans residues 65 to 85 (LHTLLSALVVAVALGVLVWAA). Topologically, residues 86–96 (ETRAAVRRCRR) are cytoplasmic. Residues 97–119 (SHPAACLAAVLAVGLLVLWVAGG) form a helical membrane-spanning segment. Over 120–122 (ACT) the chain is Extracellular. A helical membrane pass occupies residues 123–140 (FLFSIAGPVLLILVHASL). The Cytoplasmic portion of the chain corresponds to 141–178 (RLRNLKNKIENKIESIGLKRTPMGLLLEALGQEQEAGS).

This sequence belongs to the PRA1 family. Interacts with CCR5 and GDE1. Strong expression in the brain, small intestine, lung, spleen, and pancreas as well as in tumor tissues of the breast, colon, lung and ovary, with a weaker expression in normal tissues of the same patient. High expression in neuroblastic tumors. Strongly expressed in Purkinje cells and more moderately in cells of the molecular and the granular layers in the cerebellum. Detected in neuronal cells, but not in non-neuronal cells in the cerebral cortex, hippocampus, and lateral ventricles.

The protein localises to the endosome membrane. In terms of biological role, may be involved in ER/Golgi transport and vesicular traffic. Plays a proapoptotic role in cerulenin-induced neuroblastoma apoptosis. The protein is PRA1 family protein 2 (PRAF2) of Homo sapiens (Human).